Reading from the N-terminus, the 818-residue chain is MARVDFWHTASIPRLNIPALRMSDGPNGVRGTRFFNGIPAACFPCATALGATWDAHLLHEVGQLMGDESIAKGSHIVLGPTINIQRSPLGGRGFESFAEDGVLSGILAGNYCKGLQEKGVAATLKHFVCNDQEHERLAVSSIVTMRALREIYLLPFQLAMRICPTACVMTAYNKVNGTHVSENKELITDILRKEWNWDGLVMSDWFGTYTTSDAINAGLDLEMPGKTRWRGSALAHAVSSNKVAEFVLDDRVRNILNLVNWVEPLGIPEHAPEKALNRPQDRDLLRRAAAESVVLMKNEDNILPLRKDKPILVIGPNAQIAAYCGGGSASLDPYYTVSPFEGVTAKATSEVQFSQGVYSHKELPLLGPLLKTQDGKPGFTFRVYNEPPSHKDRTLVDELHLLRSSGFLMDYINPKIHSFTFFVDMEGYFTPTESGVYDFGVTVVGTGRLLIDNETVVDNTKNQRQGTAFFGNATVEERGSKHLNAGQTYKVVLEFGSAPTSDLDTRGIVVFGPGGFRFGAARQVSQEELISNAVSQASQASQVIIFAGLTSEWETEGNDREHMDLPPGTDEMISRVLDANPDNTVVCLQSGTPVTMPWVHKAKALVHAWFGGNECGNGIADVLFGDVNPSAKLPVTFPVRLQDNPSYLNFRSERGRVLYGEDVYVGYRYYEKTNVKPLYPFGHGLSYTTFSRSDLKITTSPEKSTLTDGEPITATVQVKNTGTVAGAEIVQLWVLPPKTEVNRPVRELKGFTKVFLQPGEEKQVEIVVEKKLATSWWDEQRGKWASEKGTYGVSVTGTGEEELSGEFGVERTRYWVGL.

N176 carries an N-linked (GlcNAc...) asparagine glycan. The active site involves D204. The PA14 domain maps to 374 to 534; it reads DGKPGFTFRV…SQEELISNAV (161 aa). 2 N-linked (GlcNAc...) asparagine glycosylation sites follow: N453 and N472.

Belongs to the glycosyl hydrolase 3 family.

Its subcellular location is the secreted. It carries out the reaction Hydrolysis of terminal, non-reducing beta-D-glucosyl residues with release of beta-D-glucose.. It participates in glycan metabolism; cellulose degradation. In terms of biological role, beta-glucosidases are one of a number of cellulolytic enzymes involved in the degradation of cellulosic biomass. Catalyzes the last step releasing glucose from the inhibitory cellobiose. The sequence is that of Probable beta-glucosidase I (bglI) from Aspergillus niger (strain ATCC MYA-4892 / CBS 513.88 / FGSC A1513).